Reading from the N-terminus, the 96-residue chain is Small ribosomal subunit protein bS6 (96 aa).

Belongs to the bacterial ribosomal protein bS6 family.

Its function is as follows. Binds together with bS18 to 16S ribosomal RNA. This is Small ribosomal subunit protein bS6 from Streptococcus equi subsp. equi (strain 4047).